The chain runs to 573 residues: Phosphoenolpyruvate-protein phosphotransferase (573 aa).

Catalysis depends on H190, which acts as the Tele-phosphohistidine intermediate. Residues R297 and R334 each coordinate phosphoenolpyruvate. Mg(2+)-binding residues include E433 and D457. Phosphoenolpyruvate is bound by residues 456–457 (ND) and R467. The Proton donor role is filled by C504.

This sequence belongs to the PEP-utilizing enzyme family. Homodimer. Mg(2+) serves as cofactor.

The protein resides in the cytoplasm. It catalyses the reaction L-histidyl-[protein] + phosphoenolpyruvate = N(pros)-phospho-L-histidyl-[protein] + pyruvate. General (non sugar-specific) component of the phosphoenolpyruvate-dependent sugar phosphotransferase system (sugar PTS). This major carbohydrate active-transport system catalyzes the phosphorylation of incoming sugar substrates concomitantly with their translocation across the cell membrane. Enzyme I transfers the phosphoryl group from phosphoenolpyruvate (PEP) to the phosphoryl carrier protein (HPr). The chain is Phosphoenolpyruvate-protein phosphotransferase (ptsI) from Borreliella burgdorferi (strain ATCC 35210 / DSM 4680 / CIP 102532 / B31) (Borrelia burgdorferi).